A 59-amino-acid polypeptide reads, in one-letter code: Antitoxin Rv0909 (59 aa).

Functionally, antitoxin component of a type II toxin-antitoxin (TA) system. Upon expression in M.smegmatis neutralizes the effect of cognate toxin Rv0910. This Mycobacterium tuberculosis (strain ATCC 25618 / H37Rv) protein is Antitoxin Rv0909.